A 308-amino-acid chain; its full sequence is Carbonic anhydrase 6 (308 aa).

A signal peptide spans 1–17 (MRALVLLLSLFLLGGQA). The Alpha-carbonic anhydrase domain occupies 21–278 (SDWTYSEGAL…LNHRVVESNF (258 aa)). Cysteine 42 and cysteine 224 are disulfide-bonded. An N-linked (GlcNAc...) asparagine glycan is attached at asparagine 67. The active-site Proton donor/acceptor is histidine 85. Zn(2+)-binding residues include histidine 111, histidine 113, and histidine 138. Substrate is bound at residue 220 to 221 (TT). A glycan (N-linked (GlcNAc...) asparagine) is linked at asparagine 256.

Belongs to the alpha-carbonic anhydrase family. Zn(2+) is required as a cofactor. In terms of tissue distribution, major constituent of saliva.

Its subcellular location is the secreted. The catalysed reaction is hydrogencarbonate + H(+) = CO2 + H2O. Its activity is regulated as follows. Inhibited by coumarins, sulfonamide derivatives such as acetazolamide (AZA), saccharin and Foscarnet (phosphonoformate trisodium salt). Reversible hydration of carbon dioxide. Its role in saliva is unknown. The chain is Carbonic anhydrase 6 (CA6) from Homo sapiens (Human).